A 90-amino-acid chain; its full sequence is UPF0237 protein NMB1653 (90 aa).

Residues 5–83 enclose the ACT domain; sequence VITVIGKDRV…LDIRMQNEEI (79 aa).

This sequence belongs to the UPF0237 family.

This chain is UPF0237 protein NMB1653, found in Neisseria meningitidis serogroup B (strain ATCC BAA-335 / MC58).